The following is a 132-amino-acid chain: Small ribosomal subunit protein eS24 (132 aa).

The segment covering 90–100 (RLARHGLFEKK) has biased composition (basic and acidic residues). The interval 90–132 (RLARHGLFEKKKTSRKQRKERKNRMKKVRGTKKASVGASKKKD) is disordered. Over residues 101–121 (KTSRKQRKERKNRMKKVRGTK) the composition is skewed to basic residues.

The protein belongs to the eukaryotic ribosomal protein eS24 family. In terms of assembly, component of the small ribosomal subunit.

Its subcellular location is the cytoplasm. In terms of biological role, component of the small ribosomal subunit. The ribosome is a large ribonucleoprotein complex responsible for the synthesis of proteins in the cell. Required for processing of pre-rRNA and maturation of 40S ribosomal subunits. The sequence is that of Small ribosomal subunit protein eS24 (rps24) from Takifugu rubripes (Japanese pufferfish).